Consider the following 372-residue polypeptide: METQEGVSKQSIRERIWDYMESHDIADFPRPVHHRIPNFKGAAQAAGHLPHLQAFHVARTIKVNPDAPQRNARFLVLESKKTLLVPTPRLRTGLFNKITPPPGATKDILRKCATSQGVRNFSVPVGLDSSVLVDLVVVGSVAVSEKGWRIGKGEGYADLEYAMMVSMGAVHKGTPVVTIVHDCQVVDIPEALVEDHDLTVDYILTPTRVITTGCARPKPTGIMWSKVSCEMLTKIPVLRNLREREKQAGKDVTLRDEPGSQQPAPGPIRRPQDRPQTGSRGGSRSPLQGADTQLAATVCVGNLPFTTRVRELKRVLQELGVVPLRLTWQGPQHRAVLHYTDSAAAQQAASLLQGLRLGANALRVSLGQQRDM.

Over residues 246-258 (KQAGKDVTLRDEP) the composition is skewed to basic and acidic residues. Positions 246-289 (KQAGKDVTLRDEPGSQQPAPGPIRRPQDRPQTGSRGGSRSPLQG) are disordered. In terms of domain architecture, RRM spans 296–369 (ATVCVGNLPF…NALRVSLGQQ (74 aa)).

This Mus musculus (Mouse) protein is Methenyltetrahydrofolate synthase domain-containing protein (Mthfsd).